Consider the following 248-residue polypeptide: Spherulin-1B (248 aa).

Positions 1 to 20 (MQVRNILVALVVVCFAVSEA) are cleaved as a signal peptide. Positions 61–207 (FDFKNSKLGV…SLNISSIQTV (147 aa)) constitute a Cupin type-1 domain. Mn(2+) contacts are provided by His-110, His-112, Glu-117, and His-157. An N-linked (GlcNAc...) asparagine glycan is attached at Asn-200.

The protein belongs to the germin family.

Its subcellular location is the secreted. It is found in the cell wall. This chain is Spherulin-1B, found in Physarum polycephalum (Slime mold).